The sequence spans 901 residues: MLIKLLTKVFGSRNDRTLRRMRKAVGIINAMEPEMEKLSDDELKGKTAEFRVRLEKGESVESLIPEAFAVVREASKRVFGMRHFDVQLLGGMVLNDRCIAEMRTGEGKTLTATLPAYLNALSGKGVHVVTVNDYLAQRDAENNRPLFEFLGMSVGINLPGMPAPAKREAYAADITYGTNNEYGFDYLRDNMAFSPEERVQRKLHYALVDEVDSILIDEARTPLIISGPAEDSSEMYKKVNKIIPHLIRQEKEDSDTFQGEGHFSVDEKARQVNLTERGLVLIEELLVKEGIMDEGESLYSPGNIMLMHHVTAALRAHALFTRDVDYIVKDGEVIIVDEHTGRTMQGRRWSDGLHQAVEAKEGVEIQNENQTLASITFQNYFRLYEKLAGMTGTADTEAFEFSSIYKLDTVVVPTNRPMIRKDMPDLVYMTEAEKIQAIIEDIKERTANGQPVLVGTISIEKSEVVSNELTKAGIKHNVLNAKFHANEAAIVAQAGYPAAVTIATNMAGRGTDIVLGGSWQAEVAELENPTPEQIAQIKADWQVRHEAVLASGGLHIIGTERHESRRIDNQLRGRSGRQGDAGSSRFYLSMEDALMRIFASDRVSGMMRKLGMKPGEAIEHPWVTKAIANAQRKVESRNFDIRKQLLEYDDVANDQRRAIYTQRNELLDVSDVSETINSIREDVFKVTIDAYIPPQSLEEMWDIPGLQERLKNDFDLDMPIAEWLDKEPELHEETLRERILAHSIEVYQRKEEVVGAEMMRHFEKGVMLQTLDSLWKEHLAAMDYLRQGIHLRGYAQKDPKQEYKRESFSMFAAMLESLKYEVVSTLSKVQVRMPEEVEAMEQQRREEAERLAQMQQLSHQDDDSAAAAALAAQTGDRKVGRNDPCPCGSGKKYKQCHGRLS.

ATP contacts are provided by residues Gln87, 105-109 (GEGKT), and Asp512. A disordered region spans residues 852 to 901 (AQMQQLSHQDDDSAAAAALAAQTGDRKVGRNDPCPCGSGKKYKQCHGRLS). Zn(2+) contacts are provided by Cys885, Cys887, Cys896, and His897. Over residues 891 to 901 (KKYKQCHGRLS) the composition is skewed to basic residues.

This sequence belongs to the SecA family. Monomer and homodimer. Part of the essential Sec protein translocation apparatus which comprises SecA, SecYEG and auxiliary proteins SecDF-YajC and YidC. It depends on Zn(2+) as a cofactor.

The protein localises to the cell inner membrane. The protein resides in the cytoplasm. The enzyme catalyses ATP + H2O + cellular proteinSide 1 = ADP + phosphate + cellular proteinSide 2.. Functionally, part of the Sec protein translocase complex. Interacts with the SecYEG preprotein conducting channel. Has a central role in coupling the hydrolysis of ATP to the transfer of proteins into and across the cell membrane, serving both as a receptor for the preprotein-SecB complex and as an ATP-driven molecular motor driving the stepwise translocation of polypeptide chains across the membrane. The protein is Protein translocase subunit SecA of Citrobacter koseri (strain ATCC BAA-895 / CDC 4225-83 / SGSC4696).